A 375-amino-acid polypeptide reads, in one-letter code: Chaperone protein DnaJ (375 aa).

The J domain maps to 5 to 70 (DFYETLGVAK…QKRAAYDRYG (66 aa)). A CR-type zinc finger spans residues 136–214 (GKTAQIRVPT…CHGQGRVTEE (79 aa)). 8 residues coordinate Zn(2+): Cys-149, Cys-152, Cys-166, Cys-169, Cys-188, Cys-191, Cys-202, and Cys-205. CXXCXGXG motif repeat units follow at residues 149 to 156 (CDVCSGSG), 166 to 173 (CGTCQGSG), 188 to 195 (CPTCHGRG), and 202 to 209 (CPKCHGQG).

It belongs to the DnaJ family. Homodimer. Requires Zn(2+) as cofactor.

The protein resides in the cytoplasm. Its function is as follows. Participates actively in the response to hyperosmotic and heat shock by preventing the aggregation of stress-denatured proteins and by disaggregating proteins, also in an autonomous, DnaK-independent fashion. Unfolded proteins bind initially to DnaJ; upon interaction with the DnaJ-bound protein, DnaK hydrolyzes its bound ATP, resulting in the formation of a stable complex. GrpE releases ADP from DnaK; ATP binding to DnaK triggers the release of the substrate protein, thus completing the reaction cycle. Several rounds of ATP-dependent interactions between DnaJ, DnaK and GrpE are required for fully efficient folding. Also involved, together with DnaK and GrpE, in the DNA replication of plasmids through activation of initiation proteins. The polypeptide is Chaperone protein DnaJ (Rhizobium etli (strain CIAT 652)).